Here is a 158-residue protein sequence, read N- to C-terminus: Cytochrome c-type biogenesis protein CcmE (158 aa).

Residues 1 to 8 lie on the Cytoplasmic side of the membrane; sequence MMRHRNRR. The chain crosses the membrane as a helical; Signal-anchor for type II membrane protein span at residues 9 to 29; sequence LATIAASAIVLVVAVGLGLMA. Residues 30–158 lie on the Periplasmic side of the membrane; the sequence is LRSAVVFFYS…PSAAGDGDSR (129 aa). Residues His123 and Tyr127 each contribute to the heme site. The tract at residues 139-158 is disordered; it reads AGVWQGEGETPSAAGDGDSR.

It belongs to the CcmE/CycJ family.

It is found in the cell inner membrane. Heme chaperone required for the biogenesis of c-type cytochromes. Transiently binds heme delivered by CcmC and transfers the heme to apo-cytochromes in a process facilitated by CcmF and CcmH. The sequence is that of Cytochrome c-type biogenesis protein CcmE from Maricaulis maris (strain MCS10) (Caulobacter maris).